Here is a 126-residue protein sequence, read N- to C-terminus: Fluoride-specific ion channel FluC (126 aa).

4 consecutive transmembrane segments (helical) span residues 4-24 (PLLS…LLGL), 33-53 (IPLG…FAMA), 67-87 (FVIT…IEIV), and 97-117 (MAML…CLGL). 2 residues coordinate Na(+): G74 and T77.

This sequence belongs to the fluoride channel Fluc/FEX (TC 1.A.43) family.

It localises to the cell inner membrane. The enzyme catalyses fluoride(in) = fluoride(out). Its activity is regulated as follows. Na(+) is not transported, but it plays an essential structural role and its presence is essential for fluoride channel function. Fluoride-specific ion channel. Important for reducing fluoride concentration in the cell, thus reducing its toxicity. This Acinetobacter baumannii (strain ACICU) protein is Fluoride-specific ion channel FluC.